Reading from the N-terminus, the 281-residue chain is uncharacterized protein (281 aa).

This is an uncharacterized protein from Haloarcula marismortui (strain ATCC 43049 / DSM 3752 / JCM 8966 / VKM B-1809) (Halobacterium marismortui).